Here is a 77-residue protein sequence, read N- to C-terminus: UPF0401 protein ECP_3853 (77 aa).

Belongs to the UPF0401 family.

The polypeptide is UPF0401 protein ECP_3853 (Escherichia coli O6:K15:H31 (strain 536 / UPEC)).